The chain runs to 1373 residues: Inactive tyrosine-protein kinase PRAG1 (1373 aa).

Disordered stretches follow at residues 31–50 and 197–235; these read AGHPKARANSLPAGTRLPAR and TSSCPKGPRPCTSPQPLRESLPSEDDSDQRCSPSGDSEG. Tyr238 is modified (phosphotyrosine). Basic and acidic residues-rich tracts occupy residues 250 to 263 and 272 to 284; these read DAVHSTEGSGRRGG and QGPRTRPTEEEKQ. Residues 250-338 form a disordered region; it reads DAVHSTEGSG…SGASSPFAPH (89 aa). The span at 317–333 shows a compositional bias: low complexity; the sequence is SSSDGLSCGSSRSGASS. Residues Tyr343 and Tyr391 each carry the phosphotyrosine modification. Disordered regions lie at residues 376 to 448 and 468 to 794; these read QPAS…NPAP and IYLS…LPQK. The segment covering 419-438 has biased composition (polar residues); it reads SQGQVWTGDTWIQKTPPSWS. Basic and acidic residues predominate over residues 506-522; the sequence is RESHPHNVTENTAKEKP. Low complexity predominate over residues 526–538; it reads PKLSKSSPGGSPV. Composition is skewed to polar residues over residues 568-578 and 655-670; these read NLTSSCHTNGV and TSGQNSKTNSGMSKSA. A phosphoserine mark is found at Ser671 and Ser720. Polar residues-rich tracts occupy residues 711–721 and 729–740; these read VSQSSAESLSP and SFTTGSTDSLAS. Ser757 and Ser802 each carry phosphoserine. The disordered stretch occupies residues 804–823; sequence PDGFFWTQGSPKPRTASPKL. Residues 911–954 are required for homodimerization; that stretch reads STQLQLHSLLSSISSKEGTYAKLGGLYTQSLARLVTKCEDLFMG. A Protein kinase domain is found at 945 to 1296; it reads VTKCEDLFMG…EAKRVLQCLL (352 aa). The span at 1041–1050 shows a compositional bias: polar residues; the sequence is LASPDTSSKD. Disordered regions lie at residues 1041 to 1062 and 1138 to 1171; these read LASPDTSSKDTAPAVSPQPPAQ and QSSPGPSATPTVPTTTSRCPSAAPAATTACQGGP. The span at 1139-1167 shows a compositional bias: low complexity; that stretch reads SSPGPSATPTVPTTTSRCPSAAPAATTAC. Residues 1298-1373 are required for homodimerization; sequence GPRRELVEQP…LQSLKLLQLL (76 aa).

Belongs to the protein kinase superfamily. Homodimer. Dimerization leads to the catalytic activation of CSK. Interacts (via C-terminus) with RND2. Interacts with CSK (via SH2 domain) in a Tyr-391 phosphorylation-dependent manner; this interaction potentiates kinase activity of CSK. Interacts with NOTCH1 intracellular domain (N1ICD). Forms a complex with PRAG1, N1ICD and MAML1, in a MAML1-dependent manner. In terms of processing, phosphorylated by CSK on Tyr-238, Tyr-343, and Tyr-391; Tyr-391 is a primary site of phosphorylation.

The protein resides in the cytoplasm. It is found in the nucleus. It localises to the cell junction. Its subcellular location is the focal adhesion. In terms of biological role, catalytically inactive protein kinase that acts as a scaffold protein. Functions as an effector of the small GTPase RND2, which stimulates RhoA activity and inhibits NGF-induced neurite outgrowth. Promotes Src family kinase (SFK) signaling by regulating the subcellular localization of CSK, a negative regulator of these kinases, leading to the regulation of cell morphology and motility by a CSK-dependent mechanism. Acts as a critical coactivator of Notch signaling. In Mus musculus (Mouse), this protein is Inactive tyrosine-protein kinase PRAG1.